The chain runs to 433 residues: 23S rRNA (uracil(1939)-C(5))-methyltransferase RlmD (433 aa).

A TRAM domain is found at 10–68 (RTTTRQIITVSVNDLDSFGQGVARHNGKTLFIPGLLSQENAEVTVTEDKKQYARAKVVR). The [4Fe-4S] cluster site is built by C81, C87, C90, and C162. S-adenosyl-L-methionine is bound by residues Q265, F294, N299, E315, N342, and D363. Catalysis depends on C389, which acts as the Nucleophile.

It belongs to the class I-like SAM-binding methyltransferase superfamily. RNA M5U methyltransferase family. RlmD subfamily.

It catalyses the reaction uridine(1939) in 23S rRNA + S-adenosyl-L-methionine = 5-methyluridine(1939) in 23S rRNA + S-adenosyl-L-homocysteine + H(+). Catalyzes the formation of 5-methyl-uridine at position 1939 (m5U1939) in 23S rRNA. The protein is 23S rRNA (uracil(1939)-C(5))-methyltransferase RlmD of Shigella dysenteriae serotype 1 (strain Sd197).